A 455-amino-acid polypeptide reads, in one-letter code: Bifunctional protein GlmU (455 aa).

Residues 1-227 (MLTDIVILAA…ATEALGVNDP (227 aa)) are pyrophosphorylase. UDP-N-acetyl-alpha-D-glucosamine contacts are provided by residues 8 to 11 (LAAG), Lys22, Gln73, 78 to 79 (GT), 100 to 102 (YGD), Gly137, Glu152, Asn167, and Asn225. Mg(2+) is bound at residue Asp102. A Mg(2+)-binding site is contributed by Asn225. A linker region spans residues 228-248 (VQLAILERVFQRQQLRALQMQ). The tract at residues 249–455 (GLRVADPARV…HWQRPRRDKK (207 aa)) is N-acetyltransferase. Arg331 and Lys349 together coordinate UDP-N-acetyl-alpha-D-glucosamine. His361 (proton acceptor) is an active-site residue. Residues Tyr364 and Asn375 each contribute to the UDP-N-acetyl-alpha-D-glucosamine site. Acetyl-CoA-binding positions include Ala378, 384-385 (NY), Ser403, Ala421, and Arg438. Residues 420-455 (GAGSTITKEVPPGGLTLSRSPQRTIPHWQRPRRDKK) are disordered.

The protein in the N-terminal section; belongs to the N-acetylglucosamine-1-phosphate uridyltransferase family. In the C-terminal section; belongs to the transferase hexapeptide repeat family. As to quaternary structure, homotrimer. Requires Mg(2+) as cofactor.

Its subcellular location is the cytoplasm. It catalyses the reaction alpha-D-glucosamine 1-phosphate + acetyl-CoA = N-acetyl-alpha-D-glucosamine 1-phosphate + CoA + H(+). The catalysed reaction is N-acetyl-alpha-D-glucosamine 1-phosphate + UTP + H(+) = UDP-N-acetyl-alpha-D-glucosamine + diphosphate. It participates in nucleotide-sugar biosynthesis; UDP-N-acetyl-alpha-D-glucosamine biosynthesis; N-acetyl-alpha-D-glucosamine 1-phosphate from alpha-D-glucosamine 6-phosphate (route II): step 2/2. It functions in the pathway nucleotide-sugar biosynthesis; UDP-N-acetyl-alpha-D-glucosamine biosynthesis; UDP-N-acetyl-alpha-D-glucosamine from N-acetyl-alpha-D-glucosamine 1-phosphate: step 1/1. The protein operates within bacterial outer membrane biogenesis; LPS lipid A biosynthesis. Its function is as follows. Catalyzes the last two sequential reactions in the de novo biosynthetic pathway for UDP-N-acetylglucosamine (UDP-GlcNAc). The C-terminal domain catalyzes the transfer of acetyl group from acetyl coenzyme A to glucosamine-1-phosphate (GlcN-1-P) to produce N-acetylglucosamine-1-phosphate (GlcNAc-1-P), which is converted into UDP-GlcNAc by the transfer of uridine 5-monophosphate (from uridine 5-triphosphate), a reaction catalyzed by the N-terminal domain. The protein is Bifunctional protein GlmU of Acidithiobacillus ferrooxidans (strain ATCC 23270 / DSM 14882 / CIP 104768 / NCIMB 8455) (Ferrobacillus ferrooxidans (strain ATCC 23270)).